The primary structure comprises 689 residues: Glycine--tRNA ligase beta subunit (689 aa).

This sequence belongs to the class-II aminoacyl-tRNA synthetase family. Tetramer of two alpha and two beta subunits.

The protein resides in the cytoplasm. It catalyses the reaction tRNA(Gly) + glycine + ATP = glycyl-tRNA(Gly) + AMP + diphosphate. This chain is Glycine--tRNA ligase beta subunit, found in Shewanella sp. (strain W3-18-1).